The chain runs to 206 residues: dITP/XTP pyrophosphatase (206 aa).

Substrate is bound at residue 7–12 (SSHGYK). The active-site Proton acceptor is the Asp-70. Residue Asp-70 coordinates Mg(2+). Substrate-binding positions include Thr-71, 154–157 (FGYD), Lys-177, and 182–183 (HR).

This sequence belongs to the HAM1 NTPase family. In terms of assembly, homodimer. Requires Mg(2+) as cofactor.

The enzyme catalyses XTP + H2O = XMP + diphosphate + H(+). It catalyses the reaction dITP + H2O = dIMP + diphosphate + H(+). The catalysed reaction is ITP + H2O = IMP + diphosphate + H(+). Pyrophosphatase that catalyzes the hydrolysis of nucleoside triphosphates to their monophosphate derivatives, with a high preference for the non-canonical purine nucleotides XTP (xanthosine triphosphate), dITP (deoxyinosine triphosphate) and ITP. Seems to function as a house-cleaning enzyme that removes non-canonical purine nucleotides from the nucleotide pool, thus preventing their incorporation into DNA/RNA and avoiding chromosomal lesions. The protein is dITP/XTP pyrophosphatase of Chlamydia pneumoniae (Chlamydophila pneumoniae).